The primary structure comprises 131 residues: Meiotically up-regulated gene 115 protein (131 aa).

The protein localises to the mitochondrion. It is found in the nucleus. In terms of biological role, has a role in meiosis. In Schizosaccharomyces pombe (strain 972 / ATCC 24843) (Fission yeast), this protein is Meiotically up-regulated gene 115 protein (mug115).